Consider the following 192-residue polypeptide: dCTP deaminase, dUMP-forming (192 aa).

DCTP-binding positions include Lys-101–Arg-106, Asp-119, Thr-127–Glu-129, Gln-148, Tyr-162, and Gln-174. Glu-129 acts as the Proton donor/acceptor in catalysis. The disordered stretch occupies residues Tyr-171 to Arg-192.

Belongs to the dCTP deaminase family. In terms of assembly, homotrimer.

The enzyme catalyses dCTP + 2 H2O = dUMP + NH4(+) + diphosphate. It functions in the pathway pyrimidine metabolism; dUMP biosynthesis; dUMP from dCTP: step 1/1. Its function is as follows. Bifunctional enzyme that catalyzes both the deamination of dCTP to dUTP and the hydrolysis of dUTP to dUMP without releasing the toxic dUTP intermediate. The chain is dCTP deaminase, dUMP-forming from Salinispora arenicola (strain CNS-205).